A 258-amino-acid chain; its full sequence is Imidazole glycerol phosphate synthase subunit HisF (258 aa).

Active-site residues include Asp11 and Asp130.

It belongs to the HisA/HisF family. As to quaternary structure, heterodimer of HisH and HisF.

Its subcellular location is the cytoplasm. The enzyme catalyses 5-[(5-phospho-1-deoxy-D-ribulos-1-ylimino)methylamino]-1-(5-phospho-beta-D-ribosyl)imidazole-4-carboxamide + L-glutamine = D-erythro-1-(imidazol-4-yl)glycerol 3-phosphate + 5-amino-1-(5-phospho-beta-D-ribosyl)imidazole-4-carboxamide + L-glutamate + H(+). The protein operates within amino-acid biosynthesis; L-histidine biosynthesis; L-histidine from 5-phospho-alpha-D-ribose 1-diphosphate: step 5/9. Its function is as follows. IGPS catalyzes the conversion of PRFAR and glutamine to IGP, AICAR and glutamate. The HisF subunit catalyzes the cyclization activity that produces IGP and AICAR from PRFAR using the ammonia provided by the HisH subunit. In Gluconacetobacter diazotrophicus (strain ATCC 49037 / DSM 5601 / CCUG 37298 / CIP 103539 / LMG 7603 / PAl5), this protein is Imidazole glycerol phosphate synthase subunit HisF.